We begin with the raw amino-acid sequence, 203 residues long: ATP synthase subunit b (203 aa).

The helical transmembrane segment at 14 to 34 threads the bilayer; it reads FVWPLLGAGLLLAAEGVAWAS.

This sequence belongs to the ATPase B chain family. F-type ATPases have 2 components, F(1) - the catalytic core - and F(0) - the membrane proton channel. F(1) has five subunits: alpha(3), beta(3), gamma(1), delta(1), epsilon(1). F(0) has three main subunits: a(1), b(2) and c(10-14). The alpha and beta chains form an alternating ring which encloses part of the gamma chain. F(1) is attached to F(0) by a central stalk formed by the gamma and epsilon chains, while a peripheral stalk is formed by the delta and b chains.

The protein resides in the cell inner membrane. In terms of biological role, f(1)F(0) ATP synthase produces ATP from ADP in the presence of a proton or sodium gradient. F-type ATPases consist of two structural domains, F(1) containing the extramembraneous catalytic core and F(0) containing the membrane proton channel, linked together by a central stalk and a peripheral stalk. During catalysis, ATP synthesis in the catalytic domain of F(1) is coupled via a rotary mechanism of the central stalk subunits to proton translocation. Its function is as follows. Component of the F(0) channel, it forms part of the peripheral stalk, linking F(1) to F(0). The sequence is that of ATP synthase subunit b from Syntrophobacter fumaroxidans (strain DSM 10017 / MPOB).